The primary structure comprises 201 residues: Large ribosomal subunit protein bL25 (201 aa).

It belongs to the bacterial ribosomal protein bL25 family. CTC subfamily. Part of the 50S ribosomal subunit; part of the 5S rRNA/L5/L18/L25 subcomplex. Contacts the 5S rRNA. Binds to the 5S rRNA independently of L5 and L18.

This is one of the proteins that binds to the 5S RNA in the ribosome where it forms part of the central protuberance. The polypeptide is Large ribosomal subunit protein bL25 (Aromatoleum aromaticum (strain DSM 19018 / LMG 30748 / EbN1) (Azoarcus sp. (strain EbN1))).